We begin with the raw amino-acid sequence, 234 residues long: Preflagellin peptidase (234 aa).

Position 1 (M1) is a topological domain, cytoplasmic. Residues 2 to 18 traverse the membrane as a helical segment; that stretch reads INFIVGAIGLLIASIYD. Topologically, residues 19–23 are extracellular; sequence LKSRE. Residues 24 to 46 form a helical membrane-spanning segment; the sequence is IEDYVWVSMVIFGLIYNGYLSFI. At 47–49 the chain is on the cytoplasmic side; it reads SHD. Residues 50 to 72 form a helical membrane-spanning segment; that stretch reads MLYVIQSIVGFIVCFFLGFFMFL. The Extracellular segment spans residues 73-78; the sequence is LGVGGG. Residues 79–89 form a helical membrane-spanning segment; it reads DGKLIMGLGAL. Residues 90-110 are Cytoplasmic-facing; that stretch reads IPKYNMPIHTPLGAILNYLYL. The chain crosses the membrane as a helical span at residues 111–139; it reads PSFPIMVVINAMFFSITLPIIIFLRNVIR. At 140-205 the chain is on the extracellular side; that stretch reads GVKPKTKKEV…EEIWVTPAIP (66 aa). The helical transmembrane segment at 206-217 threads the bilayer; the sequence is FVVPIFLSYLLT. The Cytoplasmic portion of the chain corresponds to 218-234; that stretch reads SIIGDKIIGIFLSVFGL.

Belongs to the peptidase A24 family. Archaeal preflagellin peptidase subfamily.

It localises to the cell membrane. It catalyses the reaction Cleaves the signal peptide of 3 to 12 amino acids from the N-terminal of preflagellin, usually at Arg-Gly-|- or Lys-Gly-|-, to release flagellin.. Functionally, cleaves the N-terminal leader peptide from preflagellins. This chain is Preflagellin peptidase (flaK), found in Methanocaldococcus jannaschii (strain ATCC 43067 / DSM 2661 / JAL-1 / JCM 10045 / NBRC 100440) (Methanococcus jannaschii).